The sequence spans 447 residues: DNA primase DnaG (447 aa).

Residues 200 to 274 (DSIIVVEGRA…DIDYVARAPE (75 aa)) form the Toprim domain. Mg(2+) is bound by residues glutamate 206, aspartate 248, and aspartate 250.

The protein belongs to the archaeal DnaG primase family. Forms a ternary complex with MCM helicase and DNA. Component of the archaeal exosome complex. It depends on Mg(2+) as a cofactor.

It catalyses the reaction ssDNA + n NTP = ssDNA/pppN(pN)n-1 hybrid + (n-1) diphosphate.. RNA polymerase that catalyzes the synthesis of short RNA molecules used as primers for DNA polymerase during DNA replication. Also part of the exosome, which is a complex involved in RNA degradation. Acts as a poly(A)-binding protein that enhances the interaction between heteromeric, adenine-rich transcripts and the exosome. The protein is DNA primase DnaG of Pyrococcus horikoshii (strain ATCC 700860 / DSM 12428 / JCM 9974 / NBRC 100139 / OT-3).